The primary structure comprises 249 residues: Small ribosomal subunit protein uS3 (249 aa).

One can recognise a KH type-2 domain in the interval 38 to 106 (IRDFLSKGLE…QVQLNILEVK (69 aa)). Basic and acidic residues predominate over residues 218–233 (ARDDRGSRRGRNDRPR). The tract at residues 218–249 (ARDDRGSRRGRNDRPRRGGGRRRRAAEQKQEG) is disordered.

Belongs to the universal ribosomal protein uS3 family. In terms of assembly, part of the 30S ribosomal subunit. Forms a tight complex with proteins S10 and S14.

Binds the lower part of the 30S subunit head. Binds mRNA in the 70S ribosome, positioning it for translation. The protein is Small ribosomal subunit protein uS3 of Corynebacterium kroppenstedtii (strain DSM 44385 / JCM 11950 / CIP 105744 / CCUG 35717).